The following is a 176-amino-acid chain: ATP-dependent protease subunit HslV (176 aa).

The active site involves threonine 5. Na(+)-binding residues include alanine 161, cysteine 164, and threonine 167.

The protein belongs to the peptidase T1B family. HslV subfamily. As to quaternary structure, a double ring-shaped homohexamer of HslV is capped on each side by a ring-shaped HslU homohexamer. The assembly of the HslU/HslV complex is dependent on binding of ATP.

The protein resides in the cytoplasm. It catalyses the reaction ATP-dependent cleavage of peptide bonds with broad specificity.. Its activity is regulated as follows. Allosterically activated by HslU binding. Protease subunit of a proteasome-like degradation complex believed to be a general protein degrading machinery. The polypeptide is ATP-dependent protease subunit HslV (Caldicellulosiruptor bescii (strain ATCC BAA-1888 / DSM 6725 / KCTC 15123 / Z-1320) (Anaerocellum thermophilum)).